A 482-amino-acid polypeptide reads, in one-letter code: Glutamyl-tRNA(Gln) amidotransferase subunit A (482 aa).

Residues K75 and S150 each act as charge relay system in the active site. S174 acts as the Acyl-ester intermediate in catalysis.

It belongs to the amidase family. GatA subfamily. In terms of assembly, heterotrimer of A, B and C subunits.

The catalysed reaction is L-glutamyl-tRNA(Gln) + L-glutamine + ATP + H2O = L-glutaminyl-tRNA(Gln) + L-glutamate + ADP + phosphate + H(+). In terms of biological role, allows the formation of correctly charged Gln-tRNA(Gln) through the transamidation of misacylated Glu-tRNA(Gln) in organisms which lack glutaminyl-tRNA synthetase. The reaction takes place in the presence of glutamine and ATP through an activated gamma-phospho-Glu-tRNA(Gln). The polypeptide is Glutamyl-tRNA(Gln) amidotransferase subunit A (Rippkaea orientalis (strain PCC 8801 / RF-1) (Cyanothece sp. (strain PCC 8801))).